Reading from the N-terminus, the 128-residue chain is Protein BEX2 (128 aa).

A disordered region spans residues 1–44; that stretch reads MMPKEEQVLKNLTMENANEENEKKDEKEQDANKGEPLALSLGAG. Positions 20–33 are enriched in basic and acidic residues; it reads ENEKKDEKEQDANK. Arg50 carries the post-translational modification Omega-N-methylarginine. Residues 103-128 form a disordered region; sequence QLSHSLRAVSTDPPHHEHNDEFCLMP. The span at 115 to 128 shows a compositional bias: basic and acidic residues; sequence PPHHEHNDEFCLMP. Residues 117 to 121 form a his cluster region; sequence HHEHN. Zn(2+) is bound at residue Cys125.

It belongs to the BEX family. In terms of assembly, interacts with LMO2, possibly leading to regulate the transcriptional activity of a DNA-binding complex containing LMO2. Interacts with OMP.

It is found in the cytoplasm. Its subcellular location is the nucleus. Regulator of mitochondrial apoptosis and G1 cell cycle. Regulates the level of PP2A regulatory subunit B and PP2A phosphatase activity. In absence of reductive stress, acts as a pseudosubstrate for the CRL2(FEM1B) complex: associates with FEM1B via zinc, thereby preventing association between FEM1B and its substrates. In Bos taurus (Bovine), this protein is Protein BEX2 (BEX2).